Here is a 262-residue protein sequence, read N- to C-terminus: Hydroxyethylthiazole kinase (262 aa).

Substrate is bound at residue M50. R125 and T171 together coordinate ATP. Position 198 (G198) interacts with substrate.

Belongs to the Thz kinase family. Mg(2+) serves as cofactor.

The enzyme catalyses 5-(2-hydroxyethyl)-4-methylthiazole + ATP = 4-methyl-5-(2-phosphooxyethyl)-thiazole + ADP + H(+). It functions in the pathway cofactor biosynthesis; thiamine diphosphate biosynthesis; 4-methyl-5-(2-phosphoethyl)-thiazole from 5-(2-hydroxyethyl)-4-methylthiazole: step 1/1. In terms of biological role, catalyzes the phosphorylation of the hydroxyl group of 4-methyl-5-beta-hydroxyethylthiazole (THZ). The polypeptide is Hydroxyethylthiazole kinase (Escherichia coli O6:H1 (strain CFT073 / ATCC 700928 / UPEC)).